The chain runs to 59 residues: Cuticle protein 16 isoform D (59 aa).

The sequence is that of Cuticle protein 16 isoform D from Limulus polyphemus (Atlantic horseshoe crab).